A 233-amino-acid chain; its full sequence is Lipoprotein-releasing system ATP-binding protein LolD (233 aa).

An ABC transporter domain is found at 6-233; that stretch reads LQCDNLCKRY…TAELSLMGAE (228 aa). Residue 42 to 49 participates in ATP binding; that stretch reads GSSGSGKS.

This sequence belongs to the ABC transporter superfamily. Lipoprotein translocase (TC 3.A.1.125) family. The complex is composed of two ATP-binding proteins (LolD) and two transmembrane proteins (LolC and LolE).

It is found in the cell inner membrane. Its function is as follows. Part of the ABC transporter complex LolCDE involved in the translocation of mature outer membrane-directed lipoproteins, from the inner membrane to the periplasmic chaperone, LolA. Responsible for the formation of the LolA-lipoprotein complex in an ATP-dependent manner. The chain is Lipoprotein-releasing system ATP-binding protein LolD from Shigella dysenteriae serotype 1 (strain Sd197).